The primary structure comprises 156 residues: Small ribosomal subunit protein uS7 (156 aa).

Belongs to the universal ribosomal protein uS7 family. As to quaternary structure, part of the 30S ribosomal subunit. Contacts proteins S9 and S11.

Its function is as follows. One of the primary rRNA binding proteins, it binds directly to 16S rRNA where it nucleates assembly of the head domain of the 30S subunit. Is located at the subunit interface close to the decoding center, probably blocks exit of the E-site tRNA. The chain is Small ribosomal subunit protein uS7 from Caldanaerobacter subterraneus subsp. tengcongensis (strain DSM 15242 / JCM 11007 / NBRC 100824 / MB4) (Thermoanaerobacter tengcongensis).